An 880-amino-acid chain; its full sequence is Alanine--tRNA ligase (880 aa).

Histidine 567, histidine 571, cysteine 669, and histidine 673 together coordinate Zn(2+).

Belongs to the class-II aminoacyl-tRNA synthetase family. Zn(2+) is required as a cofactor.

Its subcellular location is the cytoplasm. It carries out the reaction tRNA(Ala) + L-alanine + ATP = L-alanyl-tRNA(Ala) + AMP + diphosphate. Catalyzes the attachment of alanine to tRNA(Ala) in a two-step reaction: alanine is first activated by ATP to form Ala-AMP and then transferred to the acceptor end of tRNA(Ala). Also edits incorrectly charged Ser-tRNA(Ala) and Gly-tRNA(Ala) via its editing domain. This is Alanine--tRNA ligase from Bacillus mycoides (strain KBAB4) (Bacillus weihenstephanensis).